Consider the following 959-residue polypeptide: Translation initiation factor IF-2 (959 aa).

The segment at 33-373 (SHASSVEEAD…PVTERKFHEL (341 aa)) is disordered. The span at 46–60 (IASSFSAGVTKNVQA) shows a compositional bias: polar residues. Residues 63–73 (AKDKQVAEQKA) show a composition bias toward basic and acidic residues. The span at 76–100 (AKATTPQPAASKAAEKPAAATQEAS) shows a compositional bias: low complexity. Composition is skewed to basic and acidic residues over residues 112–125 (FKAE…EQVA), 134–143 (SNDRKSDYRQ), and 179–192 (NDGH…DKNR). A compositionally biased stretch (polar residues) spans 193-211 (SFNANSRQQDIGRQGQTQA). 2 stretches are compositionally biased toward basic and acidic residues: residues 234–258 (ARQR…RQEA) and 266–276 (QTEDKKHREAP). The span at 277–287 (AKATEPAEPVA) shows a compositional bias: low complexity. A compositionally biased stretch (basic and acidic residues) spans 306 to 323 (NRPDKAHDRDHGLEDGQK). Low complexity predominate over residues 328-346 (SWNSQNQVRNQKNSNWNNN). Basic residues predominate over residues 347 to 357 (KKNKKGKHHKN). One can recognise a tr-type G domain in the interval 460–629 (ERAPVVTIMG…LLVAEVEELK (170 aa)). The tract at residues 469–476 (GHVDHGKT) is G1. 469 to 476 (GHVDHGKT) provides a ligand contact to GTP. Positions 494–498 (GITQH) are G2. Positions 515-518 (DTPG) are G3. GTP is bound by residues 515-519 (DTPGH) and 569-572 (NKID). Residues 569–572 (NKID) are G4. A G5 region spans residues 605-607 (SAK).

It belongs to the TRAFAC class translation factor GTPase superfamily. Classic translation factor GTPase family. IF-2 subfamily.

Its subcellular location is the cytoplasm. Its function is as follows. One of the essential components for the initiation of protein synthesis. Protects formylmethionyl-tRNA from spontaneous hydrolysis and promotes its binding to the 30S ribosomal subunits. Also involved in the hydrolysis of GTP during the formation of the 70S ribosomal complex. The sequence is that of Translation initiation factor IF-2 from Streptococcus equi subsp. zooepidemicus (strain H70).